The primary structure comprises 184 residues: Holliday junction branch migration complex subunit RuvA (184 aa).

The interval 1–62 is domain I; the sequence is MIVGLVGEVL…EDSESLYGFV (62 aa). The tract at residues 63–134 is domain II; it reads DINEKKMFDR…ELGEFDISES (72 aa). The segment at 134–135 is flexible linker; the sequence is SN. Positions 136-184 are domain III; that stretch reads VTSSAFQEASMALQSLGFKKEQIQKALQECTATDTASLVKEALKKIQKL.

Belongs to the RuvA family. In terms of assembly, homotetramer. Forms an RuvA(8)-RuvB(12)-Holliday junction (HJ) complex. HJ DNA is sandwiched between 2 RuvA tetramers; dsDNA enters through RuvA and exits via RuvB. An RuvB hexamer assembles on each DNA strand where it exits the tetramer. Each RuvB hexamer is contacted by two RuvA subunits (via domain III) on 2 adjacent RuvB subunits; this complex drives branch migration. In the full resolvosome a probable DNA-RuvA(4)-RuvB(12)-RuvC(2) complex forms which resolves the HJ.

It is found in the cytoplasm. Functionally, the RuvA-RuvB-RuvC complex processes Holliday junction (HJ) DNA during genetic recombination and DNA repair, while the RuvA-RuvB complex plays an important role in the rescue of blocked DNA replication forks via replication fork reversal (RFR). RuvA specifically binds to HJ cruciform DNA, conferring on it an open structure. The RuvB hexamer acts as an ATP-dependent pump, pulling dsDNA into and through the RuvAB complex. HJ branch migration allows RuvC to scan DNA until it finds its consensus sequence, where it cleaves and resolves the cruciform DNA. In Nitratiruptor sp. (strain SB155-2), this protein is Holliday junction branch migration complex subunit RuvA.